A 271-amino-acid chain; its full sequence is Zinc finger CCHC domain-containing protein 9 (271 aa).

The interval 1 to 40 (MTRWARVSTTYNKRPLPATSWEDMKKGSFEGTSQNLPKRK) is disordered. Position 48 is a phosphoserine (serine 48). CCHC-type zinc fingers lie at residues 128–145 (MVCF…DCPA), 155–172 (GICY…KCKA), 184–201 (AKCF…SCPD), and 211–228 (GGCK…DCPE).

It localises to the nucleus. The protein localises to the nucleolus. Its function is as follows. May down-regulate transcription mediated by NF-kappa-B and the serum response element. The chain is Zinc finger CCHC domain-containing protein 9 (ZCCHC9) from Homo sapiens (Human).